The chain runs to 526 residues: GMP synthase [glutamine-hydrolyzing] (526 aa).

The Glutamine amidotransferase type-1 domain occupies 4–202 (KILILDFGSQ…VHDICGCDQS (199 aa)). The active-site Nucleophile is the C81. Catalysis depends on residues H176 and E178. One can recognise a GMPS ATP-PPase domain in the interval 203 to 395 (WNMPDYVETA…LGLPHDMVYR (193 aa)). 230–236 (SGGVDSS) contacts ATP.

As to quaternary structure, homodimer.

It carries out the reaction XMP + L-glutamine + ATP + H2O = GMP + L-glutamate + AMP + diphosphate + 2 H(+). The protein operates within purine metabolism; GMP biosynthesis; GMP from XMP (L-Gln route): step 1/1. Functionally, catalyzes the synthesis of GMP from XMP. This Methylobacillus flagellatus (strain ATCC 51484 / DSM 6875 / VKM B-1610 / KT) protein is GMP synthase [glutamine-hydrolyzing].